Consider the following 425-residue polypeptide: Protein CLP1 homolog (425 aa).

ATP is bound by residues glutamate 18, lysine 59, and 121 to 126; that span reads DVGKST.

It belongs to the Clp1 family. Clp1 subfamily.

The protein resides in the nucleus. Required for endonucleolytic cleavage during polyadenylation-dependent pre-mRNA 3'-end formation. In Drosophila mojavensis (Fruit fly), this protein is Protein CLP1 homolog (cbc).